The following is a 358-amino-acid chain: Trace amine-associated receptor 7d (358 aa).

Topologically, residues 1-47 (MATGDDSFPWDQDSILSRDLFSATSTELCYENLNRSCVRSPYSPGPR) are extracellular. An N-linked (GlcNAc...) asparagine glycan is attached at asparagine 34. Cystine bridges form between cysteine 37-cysteine 201 and cysteine 120-cysteine 205. The chain crosses the membrane as a helical span at residues 48-68 (LILYAVFGFGAVLAVCGNLLV). Over 69–83 (MTSILHFRQLHSPAN) the chain is Cytoplasmic. Residues 84 to 104 (FLVASLACADFLVGVMVMPFS) traverse the membrane as a helical segment. The Extracellular portion of the chain corresponds to 105–121 (MVRSVEGCWYFGESYCK). Residues 122–143 (FHSCFEGSFCYSSLFHLCFISV) form a helical membrane-spanning segment. The Cytoplasmic segment spans residues 144–166 (DRYIAVSDPLTYPTRFTASVSGK). Residues 167 to 187 (CITFSWLLSIIYSFSLLYTGA) traverse the membrane as a helical segment. At 188 to 212 (NDAGLEDLVSALTCVGGCQIAVNQT) the chain is on the extracellular side. The N-linked (GlcNAc...) asparagine glycan is linked to asparagine 210. A helical membrane pass occupies residues 213 to 233 (WVFINFLLFLIPTLVMITVYS). Residues 234–274 (KIFLIAKQQAQNIEKMSKQTARASESYKDRVTKRERKAAKT) lie on the Cytoplasmic side of the membrane. The chain crosses the membrane as a helical span at residues 275 to 295 (LGIAVAAFLLSWLPYFIDSII). Over 296–309 (DAFLGFITPTYVYE) the chain is Extracellular. The helical transmembrane segment at 310–333 (ILVWIVYYNSAMNPLIYAFFYSWF) threads the bilayer. The Cytoplasmic portion of the chain corresponds to 334–358 (RKAIKLIVSGKILRENSSTTNLFPE).

It belongs to the G-protein coupled receptor 1 family. In terms of tissue distribution, specifically expressed in neurons of the olfactory epithelium.

Its subcellular location is the cell membrane. In terms of biological role, olfactory receptor specific for trace amines, such as beta-phenylethylamine (beta-PEA). Trace amine compounds are enriched in animal body fluids and act on trace amine-associated receptors (TAARs) to elicit both intraspecific and interspecific innate behaviors. Ligand-binding causes a conformation change that triggers signaling via G(s)-class of G alpha proteins (GNAL or GNAS). The sequence is that of Trace amine-associated receptor 7d from Mus musculus (Mouse).